The chain runs to 614 residues: FAD-linked oxidoreductase ffsJ (614 aa).

The first 19 residues, 1 to 19 (MRLTRALTPAILALPAAHA), serve as a signal peptide directing secretion. 4 N-linked (GlcNAc...) asparagine glycosylation sites follow: Asn30, Asn53, Asn72, and Asn114. The 183-residue stretch at 119–301 (TGSLPAYYID…LSSTHRVEPE (183 aa)) folds into the FAD-binding PCMH-type domain. Residues Asn314, Asn329, Asn461, Asn465, Asn478, and Asn514 are each glycosylated (N-linked (GlcNAc...) asparagine). Residues 453–495 (NGHGRSNNNNSNNSSTSTSTSTSSKNGSVKPYAYGGKETTSST) are disordered. Over residues 456 to 480 (GRSNNNNSNNSSTSTSTSTSSKNGS) the composition is skewed to low complexity.

It belongs to the oxygen-dependent FAD-linked oxidoreductase family. FAD serves as cofactor.

It participates in mycotoxin biosynthesis. In terms of biological role, FAD-linked oxidoreductase; part of the gene cluster that mediates the biosynthesis of the cytotoxic leucine-containing cytochalasans, including aspochalasin C, aspochalasin E, TMC-169, flavichalasine F, aspergillin PZ, aspochalasin M and flavichalasine G. The first step in the pathway is catalyzed by the hybrid PKS-NRPS ffsA that utilizes 8 units of malonyl-CoA to iteratively assemble the octaketide chain before addition of L-leucine by the C-terminal NRPS modules. Because ffsA lacks a designated enoylreductase (ER) domain, the required activity is provided the enoyl reductase fssC. The methyltransferase (MT) domain of ffsA catalyzes the alpha-methylation at C10 and C14 using S-adenosyl-L-methionine as the methyl-donating cosubstrate. Reduction by the hydrolyase ffsE, followed by dehydration and intra-molecular Diels-Alder cyclization by the Diels-Alderase ffsF then yield the required isoindolone-fused macrocycle. A number of oxidative steps catalyzed by the tailoring cytochrome P450 monooxygenase ffsD, the FAD-linked oxidoreductase ffsJ and the short-chain dehydrogenase/reductase ffsI, are further required to afford the final products. The chain is FAD-linked oxidoreductase ffsJ from Aspergillus flavipes.